We begin with the raw amino-acid sequence, 58 residues long: DNA-directed RNA polymerases I, II, and III subunit RPABC4 (58 aa).

Zn(2+) is bound by residues cysteine 19, cysteine 22, cysteine 36, and cysteine 39. Residues 19–39 (CGECHTENEIKSRDPIRCREC) form a C4-type zinc finger.

This sequence belongs to the archaeal Rpo12/eukaryotic RPC10 RNA polymerase subunit family. As to quaternary structure, component of the RNA polymerase I (Pol I), RNA polymerase II (Pol II) and RNA polymerase III (Pol III) complexes consisting of at least 13, 12 and 17 subunits, respectively. Pol I complex consists of a ten-subunit catalytic core composed of POLR1A/RPA1, POLR1B/RPA2, POLR1C/RPAC1, POLR1D/RPAC2, POLR1H/RPA12, POLR2E/RPABC1, POLR2F/RPABC2, POLR2H/RPABC3, POLR2K/RPABC4 and POLR2L/RPABC5; a mobile stalk subunit POLR1F/RPA43 protruding from the core and additional subunits homologous to general transcription factors POLR1E/RPA49 and POLR1G/RPA34. Part of Pol I pre-initiation complex (PIC), in which Pol I core assembles with RRN3 and promoter-bound UTBF and SL1/TIF-IB complex. Pol II complex contains a ten-subunit catalytic core composed of POLR2A/RPB1, POLR2B/RPB2, POLR2C/RPB3, POLR2I/RPB9, POLR2J/RPB11, POLR2E/RPABC1, POLR2F/RPABC2, POLR2H/RPABC3, POLR2K/RPABC4 and POLR2L/RPABC5 and a mobile stalk composed of two subunits POLR2D/RPB4 and POLR2G/RPB7. Part of Pol II(G) complex, in which Pol II core associates with an additional subunit POLR2M; unlike conventional Pol II, Pol II(G) functions as a transcriptional repressor. Part of TBP-based Pol II pre-initiation complex (PIC), in which Pol II core assembles with general transcription factors and other specific initiation factors including GTF2E1, GTF2E2, GTF2F1, GTF2F2, TCEA1, ERCC2, ERCC3, GTF2H2, GTF2H3, GTF2H4, GTF2H5, GTF2A1, GTF2A2, GTF2B and TBP; this large multi-subunit PIC complex mediates DNA unwinding and targets Pol II core to the transcription start site where the first phosphodiester bond forms. Pol III complex consists of a ten-subunit catalytic core composed of POLR3A/RPC1, POLR3B/RPC2, POLR1C/RPAC1, POLR1D/RPAC2, POLR3K/RPC10, POLR2E/RPABC1, POLR2F/RPABC2, POLR2H/RPABC3, POLR2K/RPABC4 and POLR2L/RPABC5; a mobile stalk composed of two subunits POLR3H/RPC8 and CRCP/RPC9, protruding from the core and functioning primarily in transcription initiation; and additional subunits homologous to general transcription factors of the RNA polymerase II machinery, POLR3C/RPC3-POLR3F/RPC6-POLR3G/RPC7 heterotrimer required for transcription initiation and POLR3D/RPC4-POLR3E/RPC5 heterodimer involved in both transcription initiation and termination.

It localises to the nucleus. The protein resides in the nucleolus. Functionally, DNA-dependent RNA polymerase catalyzes the transcription of DNA into RNA using the four ribonucleoside triphosphates as substrates. Common component of RNA polymerases I, II and III which synthesize ribosomal RNA precursors, mRNA precursors and many functional non-coding RNAs, and a small RNAs, such as 5S rRNA and tRNAs, respectively. The sequence is that of DNA-directed RNA polymerases I, II, and III subunit RPABC4 (Polr2k) from Mus musculus (Mouse).